Reading from the N-terminus, the 84-residue chain is Cytochrome b559 subunit alpha (84 aa).

The helical transmembrane segment at 24–38 (IIHAVTLPAIFIAGF) threads the bilayer. His26 contacts heme.

It belongs to the PsbE/PsbF family. Heterodimer of an alpha subunit and a beta subunit. PSII is composed of 1 copy each of membrane proteins PsbA, PsbB, PsbC, PsbD, PsbE, PsbF, PsbH, PsbI, PsbJ, PsbK, PsbL, PsbM, PsbT, PsbX, PsbY, Psb30/Ycf12, peripheral proteins PsbO, CyanoQ (PsbQ), PsbU, PsbV and a large number of cofactors. It forms dimeric complexes. The cofactor is heme b.

Its subcellular location is the cellular thylakoid membrane. This b-type cytochrome is tightly associated with the reaction center of photosystem II (PSII). PSII is a light-driven water:plastoquinone oxidoreductase that uses light energy to abstract electrons from H(2)O, generating O(2) and a proton gradient subsequently used for ATP formation. It consists of a core antenna complex that captures photons, and an electron transfer chain that converts photonic excitation into a charge separation. The protein is Cytochrome b559 subunit alpha of Prochlorococcus marinus (strain MIT 9301).